The sequence spans 194 residues: Orotate phosphoribosyltransferase (194 aa).

Residue 117-125 (EDIVSTGLS) participates in 5-phospho-alpha-D-ribose 1-diphosphate binding. Residues Ser121 and Arg149 each contribute to the orotate site.

It belongs to the purine/pyrimidine phosphoribosyltransferase family. PyrE subfamily. Homodimer. The cofactor is Mg(2+).

The catalysed reaction is orotidine 5'-phosphate + diphosphate = orotate + 5-phospho-alpha-D-ribose 1-diphosphate. The protein operates within pyrimidine metabolism; UMP biosynthesis via de novo pathway; UMP from orotate: step 1/2. In terms of biological role, catalyzes the transfer of a ribosyl phosphate group from 5-phosphoribose 1-diphosphate to orotate, leading to the formation of orotidine monophosphate (OMP). This is Orotate phosphoribosyltransferase from Maricaulis maris (strain MCS10) (Caulobacter maris).